The primary structure comprises 655 residues: MSPPSHFDFIEARDKFTVATKNAVDTRNCKPLTTAFSHLPGNETEKKATLDQALRGVLEEQIVNQKVNVDDFLSLIYISIDGVTEGICSATTPFLLLGDVLDCLPLDQCDKIFSFVEENVSTWKSNTFYSAGKNYLLRMCNDLLRRLSKSQNTVFCGRIQLFLARLFPLSEKSGLNLQSQFNLDNITVFNKNEQDSTLGQQHTEVKEEGMDVEEGEMGDEDAPAPSSIPIDYNLYRKFWTLQDYFRNPVQCYDKFSWMTFIKYSDEALAVFKSFKLDDMQASKKKLEEMRTSSGDHVYFAKFLTSEKLMDLQLSDSNFRRHILLQYLILFQYLKGQVKFKSSSCVLNDDQSLWIEDTTKLVYQLLKEIPPDGDKFGSMVEHILNTEENWNSWKNEGCPSFVKERPAETKPIRPSRKRQAPEDFLGKGPDRKILMGNDELTRLWNLNPDNMEACKSENREFMPSLEDFFEEAIEQADPANMVEDEYKVVRNSNYGWRALRLLSRRSPHFFQPTNQQFKSLADYLENMVIKLAKELPKDIPSEEIKTGEEDDDENGDNLLKDSNDSPSIQSKAVTNSQMDEIAAKLGSQWKTLADHLEMSDKEIRVIESDSEDVDLQAKMLLVAWQDREGSQATMESLVTALNAAGFNNIADNLSET.

Disordered stretches follow at residues 403–427 (ERPA…LGKG) and 539–574 (PSEE…AVTN). The Nuclear localization signal signature appears at 415–431 (RKRQAPEDFLGKGPDRK). The segment covering 418–427 (QAPEDFLGKG) has biased composition (basic and acidic residues). Residues 563-574 (DSPSIQSKAVTN) are compositionally biased toward polar residues. Residues 573–655 (TNSQMDEIAA…NNIADNLSET (83 aa)) enclose the Death domain.

As to quaternary structure, component of the THO complex. In terms of tissue distribution, expressed in the developing neuromast.

The protein localises to the nucleus. It is found in the nucleoplasm. The protein resides in the nucleus matrix. It localises to the cytoplasm. Its subcellular location is the cytosol. In terms of biological role, component of the THO subcomplex of the TREX complex which is thought to couple mRNA transcription, processing and nuclear export, and which specifically associates with spliced mRNA and not with unspliced pre-mRNA. Required for efficient export of polyadenylated RNA. The THOC1-THOC2-THOC3 core complex alone is sufficient to bind export factor NXF1-NXT1 and promote ATPase activity of DDX39B. TREX is recruited to spliced mRNAs by a transcription-independent mechanism, binds to mRNA upstream of the exon-junction complex (EJC) and is recruited in a splicing- and cap-dependent manner to a region near the 5' end of the mRNA where it functions in mRNA export to the cytoplasm via the TAP/NXF1 pathway. Regulates transcriptional elongation of a subset of genes. Involved in genome stability by preventing co-transcriptional R-loop formation. May play a role in hair cell formation, hence may be involved in hearing. Functionally, participates in an apoptotic pathway which is characterized by activation of caspase-6, increases in the expression of BAK1 and BCL2L1 and activation of NF-kappa-B. This pathway does not require p53/TP53, nor does the presence of p53/TP53 affect the efficiency of cell killing. Activates a G2/M cell cycle checkpoint prior to the onset of apoptosis. Apoptosis is inhibited by association with RB1. Essential for early embryonic development. Required for normal gene expression during postnatal testis development. The protein is THO complex subunit 1 (thoc1) of Danio rerio (Zebrafish).